Reading from the N-terminus, the 97-residue chain is UPF0235 protein APL_1380 (97 aa).

The protein belongs to the UPF0235 family.

The protein is UPF0235 protein APL_1380 of Actinobacillus pleuropneumoniae serotype 5b (strain L20).